The sequence spans 468 residues: Phosphomethylpyrimidine synthase (468 aa).

Substrate-binding positions include Asn82, Met111, Tyr141, His177, 197–199 (SRG), 238–241 (DSLR), and Glu277. A Zn(2+)-binding site is contributed by His281. A substrate-binding site is contributed by Tyr304. Residue His345 participates in Zn(2+) binding. Positions 425, 428, and 433 each coordinate [4Fe-4S] cluster.

This sequence belongs to the ThiC family. The cofactor is [4Fe-4S] cluster.

It catalyses the reaction 5-amino-1-(5-phospho-beta-D-ribosyl)imidazole + S-adenosyl-L-methionine = 4-amino-2-methyl-5-(phosphooxymethyl)pyrimidine + CO + 5'-deoxyadenosine + formate + L-methionine + 3 H(+). It functions in the pathway cofactor biosynthesis; thiamine diphosphate biosynthesis. Functionally, catalyzes the synthesis of the hydroxymethylpyrimidine phosphate (HMP-P) moiety of thiamine from aminoimidazole ribotide (AIR) in a radical S-adenosyl-L-methionine (SAM)-dependent reaction. This Prochlorococcus marinus (strain SARG / CCMP1375 / SS120) protein is Phosphomethylpyrimidine synthase.